Consider the following 363-residue polypeptide: Protein RecA (363 aa).

Residue 77–84 coordinates ATP; sequence GPESSGKT.

Belongs to the RecA family.

Its subcellular location is the cytoplasm. Its function is as follows. Can catalyze the hydrolysis of ATP in the presence of single-stranded DNA, the ATP-dependent uptake of single-stranded DNA by duplex DNA, and the ATP-dependent hybridization of homologous single-stranded DNAs. It interacts with LexA causing its activation and leading to its autocatalytic cleavage. The polypeptide is Protein RecA (Agrobacterium fabrum (strain C58 / ATCC 33970) (Agrobacterium tumefaciens (strain C58))).